A 258-amino-acid polypeptide reads, in one-letter code: Imidazole glycerol phosphate synthase subunit HisF (258 aa).

Active-site residues include Asp11 and Asp130.

This sequence belongs to the HisA/HisF family. Heterodimer of HisH and HisF.

It localises to the cytoplasm. The catalysed reaction is 5-[(5-phospho-1-deoxy-D-ribulos-1-ylimino)methylamino]-1-(5-phospho-beta-D-ribosyl)imidazole-4-carboxamide + L-glutamine = D-erythro-1-(imidazol-4-yl)glycerol 3-phosphate + 5-amino-1-(5-phospho-beta-D-ribosyl)imidazole-4-carboxamide + L-glutamate + H(+). It participates in amino-acid biosynthesis; L-histidine biosynthesis; L-histidine from 5-phospho-alpha-D-ribose 1-diphosphate: step 5/9. Its function is as follows. IGPS catalyzes the conversion of PRFAR and glutamine to IGP, AICAR and glutamate. The HisF subunit catalyzes the cyclization activity that produces IGP and AICAR from PRFAR using the ammonia provided by the HisH subunit. This chain is Imidazole glycerol phosphate synthase subunit HisF, found in Stenotrophomonas maltophilia (strain K279a).